Consider the following 453-residue polypeptide: uncharacterized protein (453 aa).

Residues Cys74, Cys80, Cys83, and Cys162 each coordinate [4Fe-4S] cluster. Residues Gln286, Tyr315, Glu336, and Asp384 each contribute to the S-adenosyl-L-methionine site. Catalysis depends on Cys411, which acts as the Nucleophile.

The protein belongs to the class I-like SAM-binding methyltransferase superfamily. RNA M5U methyltransferase family.

This is an uncharacterized protein from Staphylococcus aureus (strain Mu50 / ATCC 700699).